We begin with the raw amino-acid sequence, 139 residues long: Peptide methionine sulfoxide reductase B4 (139 aa).

Ala-2 is subject to N-acetylalanine. Residues 12–133 (EEEWRAVLSP…NSVSINFNPA (122 aa)) enclose the MsrB domain. Zn(2+) is bound by residues Cys-51, Cys-54, Cys-97, and Cys-100. Cys-69 and Cys-122 are oxidised to a cystine. The active-site Nucleophile is the Cys-122.

Belongs to the MsrB Met sulfoxide reductase family. The cofactor is Zn(2+).

Its subcellular location is the cytoplasm. The protein localises to the cytosol. The catalysed reaction is L-methionyl-[protein] + [thioredoxin]-disulfide + H2O = L-methionyl-(R)-S-oxide-[protein] + [thioredoxin]-dithiol. Catalyzes the reduction of methionine sulfoxide (MetSO) to methionine in proteins. Plays a protective role against oxidative stress by restoring activity to proteins that have been inactivated by methionine oxidation. MSRB family specifically reduces the MetSO R-enantiomer. This Arabidopsis thaliana (Mouse-ear cress) protein is Peptide methionine sulfoxide reductase B4 (MSRB4).